Reading from the N-terminus, the 222-residue chain is Small ribosomal subunit protein uS3 (222 aa).

In terms of domain architecture, KH type-2 spans 39 to 107; the sequence is VREFLHKKLA…PVQINIEEVR (69 aa).

It belongs to the universal ribosomal protein uS3 family. As to quaternary structure, part of the 30S ribosomal subunit. Forms a tight complex with proteins S10 and S14.

Its function is as follows. Binds the lower part of the 30S subunit head. Binds mRNA in the 70S ribosome, positioning it for translation. The chain is Small ribosomal subunit protein uS3 from Francisella tularensis subsp. tularensis (strain FSC 198).